The chain runs to 355 residues: MAIDENKQKALAAALGQIEKQFGKGSIMRLGEDRSMDVETISTGSLSLDIALGAGGLPMGRIVEIYGPESSGKTTLTLQVIAAAQREGKTCAFIDAEHALDPIYAKKLGVDIDNLLCSQPDTGEQALEICDALTRSGAVDVIIVDSVAALTPKAEIEGEIGDSHMGLAARMMSQAMRKLAGNLKSSNTLLIFINQIRMKIGVMFGNPETTTGGNALKFYASVRLDIRRIGSVKNGEEVVGSETRVKVVKNKVAAPFKQAEFQIMYGEGINTYGELIDLGVKHKLVEKAGAWYSYNGDKIGQGKANATIYLKEHPEVATELDKKLREMLLHNAGEFNSAASDYEDNENEEMNNEEF.

An ATP-binding site is contributed by 67–74 (GPESSGKT). Residues 336–355 (NSAASDYEDNENEEMNNEEF) are disordered. The segment covering 341–355 (DYEDNENEEMNNEEF) has biased composition (acidic residues).

Belongs to the RecA family.

It localises to the cytoplasm. Can catalyze the hydrolysis of ATP in the presence of single-stranded DNA, the ATP-dependent uptake of single-stranded DNA by duplex DNA, and the ATP-dependent hybridization of homologous single-stranded DNAs. It interacts with LexA causing its activation and leading to its autocatalytic cleavage. This is Protein RecA from Photorhabdus laumondii subsp. laumondii (strain DSM 15139 / CIP 105565 / TT01) (Photorhabdus luminescens subsp. laumondii).